We begin with the raw amino-acid sequence, 184 residues long: UPF0149 protein PputGB1_5261 (184 aa).

This sequence belongs to the UPF0149 family.

The sequence is that of UPF0149 protein PputGB1_5261 from Pseudomonas putida (strain GB-1).